A 105-amino-acid polypeptide reads, in one-letter code: Urease subunit beta (105 aa).

This sequence belongs to the urease beta subunit family. As to quaternary structure, heterotrimer of UreA (gamma), UreB (beta) and UreC (alpha) subunits. Three heterotrimers associate to form the active enzyme.

The protein localises to the cytoplasm. It catalyses the reaction urea + 2 H2O + H(+) = hydrogencarbonate + 2 NH4(+). The protein operates within nitrogen metabolism; urea degradation; CO(2) and NH(3) from urea (urease route): step 1/1. The chain is Urease subunit beta from Mycobacterium sp. (strain JLS).